Reading from the N-terminus, the 379-residue chain is UDP-4-amino-4-deoxy-L-arabinose--oxoglutarate aminotransferase (379 aa).

The residue at position 182 (lysine 182) is an N6-(pyridoxal phosphate)lysine.

The protein belongs to the DegT/DnrJ/EryC1 family. ArnB subfamily. As to quaternary structure, homodimer. Requires pyridoxal 5'-phosphate as cofactor.

It catalyses the reaction UDP-4-amino-4-deoxy-beta-L-arabinose + 2-oxoglutarate = UDP-beta-L-threo-pentopyranos-4-ulose + L-glutamate. Its pathway is nucleotide-sugar biosynthesis; UDP-4-deoxy-4-formamido-beta-L-arabinose biosynthesis; UDP-4-deoxy-4-formamido-beta-L-arabinose from UDP-alpha-D-glucuronate: step 2/3. It functions in the pathway bacterial outer membrane biogenesis; lipopolysaccharide biosynthesis. In terms of biological role, catalyzes the conversion of UDP-4-keto-arabinose (UDP-Ara4O) to UDP-4-amino-4-deoxy-L-arabinose (UDP-L-Ara4N). The modified arabinose is attached to lipid A and is required for resistance to polymyxin and cationic antimicrobial peptides. The chain is UDP-4-amino-4-deoxy-L-arabinose--oxoglutarate aminotransferase from Salmonella dublin (strain CT_02021853).